A 459-amino-acid chain; its full sequence is Arginine biosynthesis bifunctional protein ArgJ, mitochondrial (459 aa).

The substrate site is built by Thr187, Lys216, Thr227, Glu314, Asn454, and Thr459. Thr227 (nucleophile) is an active-site residue.

The protein belongs to the ArgJ family. Heterodimer of an alpha and a beta chain. Post-translationally, the alpha and beta chains are autoproteolytically processed from a single precursor protein within the mitochondrion.

Its subcellular location is the mitochondrion matrix. The enzyme catalyses N(2)-acetyl-L-ornithine + L-glutamate = N-acetyl-L-glutamate + L-ornithine. The catalysed reaction is L-glutamate + acetyl-CoA = N-acetyl-L-glutamate + CoA + H(+). Its pathway is amino-acid biosynthesis; L-arginine biosynthesis; L-ornithine and N-acetyl-L-glutamate from L-glutamate and N(2)-acetyl-L-ornithine (cyclic): step 1/1. The protein operates within amino-acid biosynthesis; L-arginine biosynthesis; N(2)-acetyl-L-ornithine from L-glutamate: step 1/4. Catalyzes two activities which are involved in the cyclic version of arginine biosynthesis: the synthesis of acetylglutamate from glutamate and acetyl-CoA, and of ornithine by transacetylation between acetylornithine and glutamate. The chain is Arginine biosynthesis bifunctional protein ArgJ, mitochondrial from Uncinocarpus reesii (strain UAMH 1704).